The chain runs to 97 residues: Ferredoxin-like protein YdiT (97 aa).

This sequence belongs to the bacterial-type ferredoxin family. FixX subfamily.

Could be a 3Fe-4S cluster-containing protein. Probably participates in a redox process with YdiQ, YdiR and YdiS. In Escherichia coli (strain K12), this protein is Ferredoxin-like protein YdiT (ydiT).